Here is a 283-residue protein sequence, read N- to C-terminus: Beta-glucoside operon antiterminator (283 aa).

2 consecutive PRD domains span residues 65-170 (RIPL…SHMP) and 171-280 (EVMR…LQEQ).

It belongs to the transcriptional antiterminator BglG family. Post-translationally, phosphorylated and inactivated by ArbF (EII-Bgl). The degree of phosphorylation is dependent on the presence or absence of beta-glucosides which act as inducers of the operon expression. Addition of inducer result in the rapid dephosphorylation of ArbG.

Functionally, mediates the positive regulation of the beta-glucoside (arb) operon by functioning as a transcriptional antiterminator. This is an RNA-binding protein that recognizes a specific sequence located just upstream of two termination sites within the operon. The protein is Beta-glucoside operon antiterminator (arbG) of Dickeya chrysanthemi (Pectobacterium chrysanthemi).